Here is a 450-residue protein sequence, read N- to C-terminus: uncharacterized protein (450 aa).

One can recognise a TRAM domain in the interval 1-58; the sequence is MAKGEIVTVKIEEMDFKGYGVGYCEGKPLKVRGGILGQRVAVRVKKGKKGRAEGEIVE. [4Fe-4S] cluster-binding residues include C71, C77, C80, and C159. S-adenosyl-L-methionine contacts are provided by Q285, Y314, E335, and D380. C407 acts as the Nucleophile in catalysis.

Belongs to the class I-like SAM-binding methyltransferase superfamily. RNA M5U methyltransferase family.

This is an uncharacterized protein from Caldanaerobacter subterraneus subsp. tengcongensis (strain DSM 15242 / JCM 11007 / NBRC 100824 / MB4) (Thermoanaerobacter tengcongensis).